A 320-amino-acid polypeptide reads, in one-letter code: o-succinylbenzoate synthase (320 aa).

Residue lysine 133 is the Proton donor of the active site. Positions 161, 190, and 213 each coordinate Mg(2+). The active-site Proton acceptor is lysine 235.

The protein belongs to the mandelate racemase/muconate lactonizing enzyme family. MenC type 1 subfamily. The cofactor is a divalent metal cation.

The enzyme catalyses (1R,6R)-6-hydroxy-2-succinyl-cyclohexa-2,4-diene-1-carboxylate = 2-succinylbenzoate + H2O. It participates in quinol/quinone metabolism; 1,4-dihydroxy-2-naphthoate biosynthesis; 1,4-dihydroxy-2-naphthoate from chorismate: step 4/7. Its pathway is quinol/quinone metabolism; menaquinone biosynthesis. Functionally, converts 2-succinyl-6-hydroxy-2,4-cyclohexadiene-1-carboxylate (SHCHC) to 2-succinylbenzoate (OSB). The sequence is that of o-succinylbenzoate synthase from Escherichia coli O157:H7.